Reading from the N-terminus, the 1198-residue chain is Chromosome partition protein Smc (1198 aa).

ATP is bound at residue 40–47; it reads PNGSGKSN. Coiled coils occupy residues 175 to 211 and 322 to 524; these read ITKY…GQLG and LGEQ…LAKK. The 114-residue stretch at 534-647 folds into the SMC hinge domain; the sequence is CGTLADLLQV…VTDMEAATRV (114 aa). Residues 687–1042 are a coiled coil; the sequence is SREIQELRQE…AELDKTMSER (356 aa). Positions 785–818 are disordered; sequence AEEQSKLTDSIQEAQEALARQEEKNRQASREMEQ. The segment covering 803–818 has biased composition (basic and acidic residues); that stretch reads ARQEEKNRQASREMEQ.

This sequence belongs to the SMC family. As to quaternary structure, homodimer.

Its subcellular location is the cytoplasm. In terms of biological role, required for chromosome condensation and partitioning. The chain is Chromosome partition protein Smc from Desulfitobacterium hafniense (strain Y51).